Reading from the N-terminus, the 366-residue chain is Fructose-bisphosphate aldolase 1 (366 aa).

The substrate site is built by R56 and K147. The active-site Proton acceptor is the E189. K231 (schiff-base intermediate with dihydroxyacetone-P) is an active-site residue.

Belongs to the class I fructose-bisphosphate aldolase family. In terms of tissue distribution, ubiquitous.

It catalyses the reaction beta-D-fructose 1,6-bisphosphate = D-glyceraldehyde 3-phosphate + dihydroxyacetone phosphate. It participates in carbohydrate degradation; glycolysis; D-glyceraldehyde 3-phosphate and glycerone phosphate from D-glucose: step 4/4. Functionally, may be involved in the metabolism of fructose-bisphosphate (beta-D-fructose 1,6-bisphosphate) and of fructose 1-phosphate. The polypeptide is Fructose-bisphosphate aldolase 1 (aldo-1) (Caenorhabditis elegans).